The primary structure comprises 86 residues: Putative regulatory protein Dvul_2085 (86 aa).

This sequence belongs to the RemA family.

The chain is Putative regulatory protein Dvul_2085 from Nitratidesulfovibrio vulgaris (strain DP4) (Desulfovibrio vulgaris).